We begin with the raw amino-acid sequence, 395 residues long: 1-deoxy-D-xylulose 5-phosphate reductoisomerase (395 aa).

The NADPH site is built by threonine 10, glycine 11, serine 12, isoleucine 13, lysine 37, and asparagine 123. Lysine 124 contacts 1-deoxy-D-xylulose 5-phosphate. Glutamate 125 lines the NADPH pocket. Aspartate 149 contacts Mn(2+). Residues serine 150, glutamate 151, serine 185, and histidine 208 each contribute to the 1-deoxy-D-xylulose 5-phosphate site. Position 151 (glutamate 151) interacts with Mn(2+). Position 214 (glycine 214) interacts with NADPH. The 1-deoxy-D-xylulose 5-phosphate site is built by serine 221, asparagine 226, lysine 227, and glutamate 230. Glutamate 230 provides a ligand contact to Mn(2+).

This sequence belongs to the DXR family. Mg(2+) serves as cofactor. Requires Mn(2+) as cofactor.

It catalyses the reaction 2-C-methyl-D-erythritol 4-phosphate + NADP(+) = 1-deoxy-D-xylulose 5-phosphate + NADPH + H(+). It participates in isoprenoid biosynthesis; isopentenyl diphosphate biosynthesis via DXP pathway; isopentenyl diphosphate from 1-deoxy-D-xylulose 5-phosphate: step 1/6. In terms of biological role, catalyzes the NADPH-dependent rearrangement and reduction of 1-deoxy-D-xylulose-5-phosphate (DXP) to 2-C-methyl-D-erythritol 4-phosphate (MEP). In Shewanella loihica (strain ATCC BAA-1088 / PV-4), this protein is 1-deoxy-D-xylulose 5-phosphate reductoisomerase.